A 156-amino-acid polypeptide reads, in one-letter code: Ribosomal RNA large subunit methyltransferase H (156 aa).

Residues L73, G104, and 123–128 (LSPLTL) each bind S-adenosyl-L-methionine.

The protein belongs to the RNA methyltransferase RlmH family. As to quaternary structure, homodimer.

The protein localises to the cytoplasm. The catalysed reaction is pseudouridine(1915) in 23S rRNA + S-adenosyl-L-methionine = N(3)-methylpseudouridine(1915) in 23S rRNA + S-adenosyl-L-homocysteine + H(+). Specifically methylates the pseudouridine at position 1915 (m3Psi1915) in 23S rRNA. The chain is Ribosomal RNA large subunit methyltransferase H from Hahella chejuensis (strain KCTC 2396).